A 495-amino-acid polypeptide reads, in one-letter code: ATP synthase subunit beta, chloroplastic (495 aa).

An ATP-binding site is contributed by 172–179 (GGAGVGKT).

The protein belongs to the ATPase alpha/beta chains family. F-type ATPases have 2 components, CF(1) - the catalytic core - and CF(0) - the membrane proton channel. CF(1) has five subunits: alpha(3), beta(3), gamma(1), delta(1), epsilon(1). CF(0) has four main subunits: a(1), b(1), b'(1) and c(9-12).

The protein resides in the plastid. It is found in the chloroplast thylakoid membrane. It carries out the reaction ATP + H2O + 4 H(+)(in) = ADP + phosphate + 5 H(+)(out). In terms of biological role, produces ATP from ADP in the presence of a proton gradient across the membrane. The catalytic sites are hosted primarily by the beta subunits. In Scilla siberica (Siberian squill), this protein is ATP synthase subunit beta, chloroplastic.